The primary structure comprises 212 residues: 2-dehydro-3-deoxy-phosphogluconate aldolase (212 aa).

Glu45 serves as the catalytic Proton acceptor. Pyruvate contacts are provided by Arg49, Thr73, and Lys133. Residue Lys133 is the Schiff-base intermediate with substrate of the active site.

This sequence belongs to the KHG/KDPG aldolase family. Homotrimer.

The protein resides in the cytoplasm. It carries out the reaction 2-dehydro-3-deoxy-6-phospho-D-gluconate = D-glyceraldehyde 3-phosphate + pyruvate. Its pathway is carbohydrate acid metabolism; 2-dehydro-3-deoxy-D-gluconate degradation; D-glyceraldehyde 3-phosphate and pyruvate from 2-dehydro-3-deoxy-D-gluconate: step 2/2. Its function is as follows. Involved in the degradation of glucose via the Entner-Doudoroff pathway. Catalyzes the reversible, stereospecific retro-aldol cleavage of 2-keto-3-deoxy-6-phosphogluconate (KDPG) to pyruvate and D-glyceraldehyde-3-phosphate. This chain is 2-dehydro-3-deoxy-phosphogluconate aldolase (eda), found in Haemophilus influenzae (strain ATCC 51907 / DSM 11121 / KW20 / Rd).